The sequence spans 241 residues: Uridylate kinase (241 aa).

Position 15–18 (15–18 (KLSG)) interacts with ATP. Residues 23–28 (GSEGFG) are involved in allosteric activation by GTP. Glycine 57 is a UMP binding site. The ATP site is built by glycine 58 and arginine 62. Residues aspartate 77 and 138-145 (TGNPFCTT) each bind UMP. ATP contacts are provided by threonine 165, tyrosine 171, and aspartate 174.

This sequence belongs to the UMP kinase family. In terms of assembly, homohexamer.

The protein resides in the cytoplasm. It catalyses the reaction UMP + ATP = UDP + ADP. Its pathway is pyrimidine metabolism; CTP biosynthesis via de novo pathway; UDP from UMP (UMPK route): step 1/1. Its activity is regulated as follows. Allosterically activated by GTP. Inhibited by UTP. In terms of biological role, catalyzes the reversible phosphorylation of UMP to UDP. The chain is Uridylate kinase from Shewanella amazonensis (strain ATCC BAA-1098 / SB2B).